A 442-amino-acid polypeptide reads, in one-letter code: tRNA-2-methylthio-N(6)-dimethylallyladenosine synthase (442 aa).

In terms of domain architecture, MTTase N-terminal spans 5 to 122 (KKVFIKTLGC…LPEMIKRKQS (118 aa)). 6 residues coordinate [4Fe-4S] cluster: Cys14, Cys51, Cys85, Cys159, Cys163, and Cys166. Residues 145–378 (KAEGAKAYVS…DLLNSNAQII (234 aa)) enclose the Radical SAM core domain. Residues 380–442 (RQMVGTEQRI…LPNSLRGELI (63 aa)) form the TRAM domain.

Belongs to the methylthiotransferase family. MiaB subfamily. Monomer. [4Fe-4S] cluster serves as cofactor.

It localises to the cytoplasm. It carries out the reaction N(6)-dimethylallyladenosine(37) in tRNA + (sulfur carrier)-SH + AH2 + 2 S-adenosyl-L-methionine = 2-methylsulfanyl-N(6)-dimethylallyladenosine(37) in tRNA + (sulfur carrier)-H + 5'-deoxyadenosine + L-methionine + A + S-adenosyl-L-homocysteine + 2 H(+). Functionally, catalyzes the methylthiolation of N6-(dimethylallyl)adenosine (i(6)A), leading to the formation of 2-methylthio-N6-(dimethylallyl)adenosine (ms(2)i(6)A) at position 37 in tRNAs that read codons beginning with uridine. In Francisella philomiragia subsp. philomiragia (strain ATCC 25017 / CCUG 19701 / FSC 153 / O#319-036), this protein is tRNA-2-methylthio-N(6)-dimethylallyladenosine synthase.